A 517-amino-acid chain; its full sequence is MIESDTSSIMSGIIRNSGQNHHPSPQEYRLLATTSDDDLPGDLQSLSWLTAVDVPRLQQMASGRVDLGGPCVPHPHPGALAGVADLHVGATPSPLLHGPAGMAPRGMPGLGPITGHRDSMSQFPVGGQPSSGLQDPPHLYSPATQPQFPLPPGAQQCPPVGLYGPPFGVRPPYPQPHVAVHSSQELHPKHYPKPIYSYSCLIAMALKNSKTGSLPVSEIYSFMKEHFPYFKTAPDGWKNSVRHNLSLNKCFEKVENKMSGSSRKGCLWALNLARIDKMEEEMHKWKRKDLAAIHRSMANPEELDKLISDRPESCRRPGKPGEPEAPVLTHATTVAVAHGCLAVSQLPPQPLMTLSLQSVPLHHQVQPQAHLAPDSPAPAQTPPLHALPDLSPSPLPHPAMGRAPVDFINISTDMNTEVDALDPSIMDFALQGNLWEEMKDEGFSLDTLGAFADSPLGCDLGASGLTPASGGSDQSFPDLQVTGLYTAYSTPDSVAASGTSSSSQYLGAQGNKPIALL.

The fork-head DNA-binding region spans 193-289; that stretch reads KPIYSYSCLI…EEMHKWKRKD (97 aa). Disordered stretches follow at residues 365-398 and 497-517; these read VQPQ…LPHP and SGTS…IALL.

The protein resides in the nucleus. Its function is as follows. Transcription factor essential for neural and some non-neural tissues development, such as retina and lung respectively. Binds to an 11-bp consensus sequence containing the invariant tetranucleotide 5'-ACGC-3'. During development of the central nervous system, is required to specify the amacrine and horizontal cell fates from multipotent retinal progenitors while suppressing the alternative photoreceptor cell fates through activating DLL4-NOTCH signaling. Also acts synergistically with ASCL1/MASH1 to activate DLL4-NOTCH signaling and drive commitment of p2 progenitors to the V2b interneuron fates during spinal cord neurogenesis. In development of non-neural tissues, plays an essential role in the specification of the atrioventricular canal and is indirectly required for patterning the distal airway during lung development. The sequence is that of Forkhead box protein N4 (FOXN4) from Homo sapiens (Human).